The primary structure comprises 516 residues: Cytochrome P450 monooxygenase otaC (516 aa).

The chain crosses the membrane as a helical span at residues 13 to 30 (FLWTAFAVGVVYCCTRMV). Cys-454 provides a ligand contact to heme.

This sequence belongs to the cytochrome P450 family. Heme serves as cofactor.

It localises to the membrane. The catalysed reaction is 7-methylmellein + 3 reduced [NADPH--hemoprotein reductase] + 3 O2 = 7-carboxymellein + 3 oxidized [NADPH--hemoprotein reductase] + 4 H2O + 4 H(+). The protein operates within mycotoxin biosynthesis. Its function is as follows. Cytochrome P450 monooxygenase; part of the gene cluster that mediates the biosynthesis of ochratoxin A (OTA), a mycotoxin composed of a chlorinated type I polyketide dihydroisocoumarin moiety linked to L-phenylalanine, and demonstrated to have nephrotoxic, immunotoxic, genotoxic, neurotoxic, and teratogenic properties. OtaC catalyzes the oxidation of 7-methylmellein (7-MM) into 7-carboxymellein. The pathway begins with the highly reducing polyketide synthase otaA that catalyzes the formation of the isocoumarin group during the initial stages of biosynthesis, starting from one acetate and 4 malonate units, to originate the characteristic pentaketide skeleton 7-methylmellein (7-MM) of the OTA molecule. The newly identified cyclase otaY might be involved in the polyketide cyclization reaction during the initial steps of the OTA biosynthesis. 7-MM is then oxidized into 7-carboxymellein (also called ochratoxin beta) by the cytochrome P450 monooxygenase otaC. The NRPS encoded by the otaB gene is involved in the linking of phenylalanine to the dihydroisocoumarin ring. The reaction catalyzed by NRPS results in the production of ochratoxin B (OTB), which is the non-chlorinated analog of OTA and which subsequently serves as the substrate of the halogenase otaD for chlorination activity to form the final molecular structure of OTA, containing a chlorine atom in the C-5 position of the molecule. The chain is Cytochrome P450 monooxygenase otaC from Aspergillus carbonarius (strain ITEM 5010).